Reading from the N-terminus, the 648-residue chain is Centrosomal protein of 63 kDa-B (648 aa).

Coiled coils occupy residues 19-188 and 222-555; these read DSCE…QSHN and EEEL…DAAS. Serine 559 carries the phosphoserine; by atm and atr modification. Residues 611–644 are a coiled coil; the sequence is FLQEEEQRSHELLQRLNAHIEELKQESQRTVEHF.

Belongs to the CEP63 family. Post-translationally, phosphorylation at Ser-559 by atm and atr promotes its delocalization from the centrosome and impairs its ability to promote centrosome dependent spindle assembly.

It is found in the cytoplasm. Its subcellular location is the cytoskeleton. It localises to the microtubule organizing center. The protein resides in the centrosome. The protein localises to the centriole. Required for normal spindle assembly. Plays a key role in mother-centriole-dependent centriole duplication. Plays a role in DNA damage response. Following DNA damage, such as double-strand breaks (DSBs), is removed from centrosomes; this leads to the inactivation of spindle assembly and delay in mitotic progression. This is Centrosomal protein of 63 kDa-B (cep63-b) from Xenopus laevis (African clawed frog).